Here is a 1405-residue protein sequence, read N- to C-terminus: DNA-directed RNA polymerase subunit beta' (1405 aa).

Positions 70, 72, 85, and 88 each coordinate Zn(2+). Mg(2+) is bound by residues aspartate 460, aspartate 462, and aspartate 464. Positions 814, 888, 895, and 898 each coordinate Zn(2+).

It belongs to the RNA polymerase beta' chain family. In terms of assembly, the RNAP catalytic core consists of 2 alpha, 1 beta, 1 beta' and 1 omega subunit. When a sigma factor is associated with the core the holoenzyme is formed, which can initiate transcription. Mg(2+) is required as a cofactor. It depends on Zn(2+) as a cofactor.

It carries out the reaction RNA(n) + a ribonucleoside 5'-triphosphate = RNA(n+1) + diphosphate. In terms of biological role, DNA-dependent RNA polymerase catalyzes the transcription of DNA into RNA using the four ribonucleoside triphosphates as substrates. In Shewanella baltica (strain OS223), this protein is DNA-directed RNA polymerase subunit beta'.